The following is a 950-amino-acid chain: Leucine--tRNA ligase 2 (950 aa).

The 'HIGH' region motif lies at Pro47–His57. Positions Lys631–Ser635 match the 'KMSKS' region motif. Lys634 contributes to the ATP binding site.

The protein belongs to the class-I aminoacyl-tRNA synthetase family.

It is found in the cytoplasm. The catalysed reaction is tRNA(Leu) + L-leucine + ATP = L-leucyl-tRNA(Leu) + AMP + diphosphate. This Metallosphaera sedula (strain ATCC 51363 / DSM 5348 / JCM 9185 / NBRC 15509 / TH2) protein is Leucine--tRNA ligase 2.